The chain runs to 739 residues: Phosphoribosylformylglycinamidine synthase subunit PurL (739 aa).

His53 is an active-site residue. 2 residues coordinate ATP: Tyr56 and Lys95. Residue Glu97 coordinates Mg(2+). Residues 98-101 (SHNH) and Arg120 contribute to the substrate site. His99 serves as the catalytic Proton acceptor. Asp121 provides a ligand contact to Mg(2+). Residue Gln244 participates in substrate binding. Asp274 serves as a coordination point for Mg(2+). 318-320 (ESQ) contributes to the substrate binding site. Positions 501 and 538 each coordinate ATP. Asn539 contacts Mg(2+). Ser541 lines the substrate pocket.

This sequence belongs to the FGAMS family. As to quaternary structure, monomer. Part of the FGAM synthase complex composed of 1 PurL, 1 PurQ and 2 PurS subunits.

Its subcellular location is the cytoplasm. The catalysed reaction is N(2)-formyl-N(1)-(5-phospho-beta-D-ribosyl)glycinamide + L-glutamine + ATP + H2O = 2-formamido-N(1)-(5-O-phospho-beta-D-ribosyl)acetamidine + L-glutamate + ADP + phosphate + H(+). The protein operates within purine metabolism; IMP biosynthesis via de novo pathway; 5-amino-1-(5-phospho-D-ribosyl)imidazole from N(2)-formyl-N(1)-(5-phospho-D-ribosyl)glycinamide: step 1/2. Functionally, part of the phosphoribosylformylglycinamidine synthase complex involved in the purines biosynthetic pathway. Catalyzes the ATP-dependent conversion of formylglycinamide ribonucleotide (FGAR) and glutamine to yield formylglycinamidine ribonucleotide (FGAM) and glutamate. The FGAM synthase complex is composed of three subunits. PurQ produces an ammonia molecule by converting glutamine to glutamate. PurL transfers the ammonia molecule to FGAR to form FGAM in an ATP-dependent manner. PurS interacts with PurQ and PurL and is thought to assist in the transfer of the ammonia molecule from PurQ to PurL. The protein is Phosphoribosylformylglycinamidine synthase subunit PurL of Listeria monocytogenes serotype 4b (strain F2365).